The sequence spans 387 residues: Succinate--CoA ligase [ADP-forming] subunit beta (387 aa).

The region spanning 9–244 (KALLQRYGVN…WSQDDAKEAE (236 aa)) is the ATP-grasp domain. ATP contacts are provided by residues Lys-46, 53–55 (GRG), Glu-99, Leu-102, and Glu-107. Positions 199 and 213 each coordinate Mg(2+). Substrate is bound by residues Asn-264 and 321 to 323 (GIM).

The protein belongs to the succinate/malate CoA ligase beta subunit family. As to quaternary structure, heterotetramer of two alpha and two beta subunits. The cofactor is Mg(2+).

The catalysed reaction is succinate + ATP + CoA = succinyl-CoA + ADP + phosphate. It carries out the reaction GTP + succinate + CoA = succinyl-CoA + GDP + phosphate. The protein operates within carbohydrate metabolism; tricarboxylic acid cycle; succinate from succinyl-CoA (ligase route): step 1/1. Its function is as follows. Succinyl-CoA synthetase functions in the citric acid cycle (TCA), coupling the hydrolysis of succinyl-CoA to the synthesis of either ATP or GTP and thus represents the only step of substrate-level phosphorylation in the TCA. The beta subunit provides nucleotide specificity of the enzyme and binds the substrate succinate, while the binding sites for coenzyme A and phosphate are found in the alpha subunit. The sequence is that of Succinate--CoA ligase [ADP-forming] subunit beta from Methylobacillus flagellatus (strain ATCC 51484 / DSM 6875 / VKM B-1610 / KT).